The chain runs to 342 residues: Polygalacturonase inhibitor 3 (342 aa).

Positions 1–29 (MTQFNIPVTMSSSLSIILVILVSLRTALS) are cleaved as a signal peptide. Intrachain disulfides connect cysteine 32–cysteine 62 and cysteine 63–cysteine 72. N-linked (GlcNAc...) asparagine glycosylation is present at asparagine 64. LRR repeat units lie at residues 82–107 (NNLDLSGHNLPKPYPIPSSLANLPYL), 108–132 (NFLYIGGINNLVGPIPPAIAKLTQL), 133–156 (HYLYITHTNVSGAIPDFLSQIKTL), 157–180 (VTLDFSYNALSGTLPPSISSLPNL), 181–205 (VGITFDGNRISGAIPDSYGSFSKLF), 206–228 (TSMTISRNRLTGKIPPTFANLNL), 229–252 (AFVDLSRNMLQGDASVLFGSDKNT), 253–275 (QKIHLAKNSLDFDLEKVGLSKNL), 276–299 (NGLDLRNNRIYGTLPQGLTQLKFL), and 300–319 (HSLNVSFNNLCGEIPQGGNL). Asparagine 141 is a glycosylation site (N-linked (GlcNAc...) asparagine). Asparagine 303 carries N-linked (GlcNAc...) asparagine glycosylation. 2 disulfides stabilise this stretch: cysteine 310/cysteine 332 and cysteine 334/cysteine 341.

It belongs to the polygalacturonase-inhibiting protein family. In terms of tissue distribution, found in suspension-cultured cells and to a lesser extent in hypocotyls, leaves and flowers.

The protein resides in the secreted. Its subcellular location is the cell wall. It is found in the membrane. In terms of biological role, inhibitor of fungal polygalacturonase. It is an important factor for plant resistance to phytopathogenic fungi. In Phaseolus vulgaris (Kidney bean), this protein is Polygalacturonase inhibitor 3 (PGIP3).